The following is a 1117-amino-acid chain: MFDLDKNTNIESNHVKIGNKNTTRRLIIKSSKNSVRIAYAPPEKHFVDVTDRFLLPETETQNLKTRLGIFELEPLPPNGLVCCVLPNGELIQPNDFVLVNSPFPGEPFQIARIISFEKSRPCVSTNLYDSVRLNWYFRPRDIQRHLTDTRLLFASMHSDIYNIGSVQEKCTVKHRSQIENLDEYKSQAKSYYFDRLFDQNINKVFDVVPVTQVKNAPDDVLEDLFKNYDFIVTEYGKGRALLNEPSNCKVCKKWCAFDFSVQCADCKKYYHMDCVVPPLLKKPPHGFGWTCATCSFATQRKKSTFQKENANVDANHATENNLEGQATQKSVSILKGHNKALSNVSLQEDHGKRRNLKSLRSSRNLHQQSRKSLDENKPNSFSNVSKLKRLPWNMRYLDLKSDLTVEKKSDIYPSRARISISPMLPTSSEDNLHPLQPLTTADEEMDLDLKSDERFKVDIPTFFERWPFLKDLPLKGYLFPLCEPNLQSAMLLVPITYSDALLDDYLCSCWNLWKKLRLPVSAFVFLELTITALYETKLSPAAAFEKLKSWMPGFGDPKNCTGKRVDEHKINSLVKEFGVSLQCFVEKLKFEYSLKEIFFSFLSWASSPKGLNTFKKLSDSSLSTTTTDSHGLPTCCYDIGMYDLQKILKLKKTPICRWCHSKRSSEWFVAPPIEESSPKDKSKIVALCQRCGYVWRYYGYPLQQATPSDLRNCDFEPVKKRKADWDHLSNHDNEVKKENNRIRNASSLMENPRVSTKTFDNFTLTHDSTINVKADTVKRARQNNIKNKDDVNFSEDRKKCCALCGIVGTEGLLVCFKCGTCVHERCYVCDDYAENEQMLVSASHLSGRTTRNSASPGIVSGKKSYAKKDQVLSWACLSCRSNDNLGQNNDNHCVLCLQSASHSLMKKTVEGNWVHLICASWTPDVYVPAEESEPVCGIAQLPPNRWEKKCEVCGNSFGVCVSSPNSGLTSHVTCAEKANWYLGFEFVKQDQSPFSMLSNLKSLSFFGNVTEINTNKCMINSWTSLRPVLFGPSEQLPRNFLLRNDIVPNTNNSAWSEYIRNLYPKAYIYLLQYTIAVCKPTIAPTNVACCCSKCNSTMSPFWWPGNICQACHCLRVE.

The BAH domain maps to 89–208; it reads ELIQPNDFVL…QNINKVFDVV (120 aa). A Phorbol-ester/DAG-type zinc finger spans residues 227–282; that stretch reads NYDFIVTEYGKGRALLNEPSNCKVCKKWCAFDFSVQCADCKKYYHMDCVVPPLLKK. The segment at 245–297 adopts a PHD-type 1 zinc-finger fold; the sequence is PSNCKVCKKWCAFDFSVQCADCKKYYHMDCVVPPLLKKPPHGFGWTCATCSFA. The disordered stretch occupies residues 361–380; sequence SSRNLHQQSRKSLDENKPNS. A PHD-type 2 zinc finger spans residues 798 to 882; that stretch reads KKCCALCGIV…SWACLSCRSN (85 aa). The C2HC pre-PHD-type zinc finger occupies 890-925; it reads DNHCVLCLQSASHSLMKKTVEGNWVHLICASWTPDV. The PHD-type 3; degenerate zinc finger occupies 948–1002; the sequence is KKCEVCGNSFGVCVSSPNSGLTSHVTCAEKANWYLGFEFVKQDQSPFSMLSNLKS.

In terms of assembly, component of the Lid2 complex composed of ash2, jmj3, lid2, sdc1 and snt2.

Its subcellular location is the nucleus. The polypeptide is Lid2 complex component snt2 (snt2) (Schizosaccharomyces pombe (strain 972 / ATCC 24843) (Fission yeast)).